The following is a 208-amino-acid chain: 3-demethoxyubiquinol 3-hydroxylase (208 aa).

Residues Glu57, Glu87, His90, Glu139, Glu171, and His174 each coordinate Fe cation.

Belongs to the COQ7 family. Fe cation is required as a cofactor.

Its subcellular location is the cell membrane. The catalysed reaction is a 5-methoxy-2-methyl-3-(all-trans-polyprenyl)benzene-1,4-diol + AH2 + O2 = a 3-demethylubiquinol + A + H2O. The protein operates within cofactor biosynthesis; ubiquinone biosynthesis. Its function is as follows. Catalyzes the hydroxylation of 2-nonaprenyl-3-methyl-6-methoxy-1,4-benzoquinol during ubiquinone biosynthesis. The polypeptide is 3-demethoxyubiquinol 3-hydroxylase (Burkholderia thailandensis (strain ATCC 700388 / DSM 13276 / CCUG 48851 / CIP 106301 / E264)).